We begin with the raw amino-acid sequence, 70 residues long: Sec-independent protein translocase protein TatA (70 aa).

A helical membrane pass occupies residues 1–21 (MGSFSIWHWLIVLVVVLLIFG). A disordered region spans residues 46–70 (DAPKISESDKGGHTIDAEVKDKQNS).

It belongs to the TatA/E family. In terms of assembly, the Tat system comprises two distinct complexes: a TatABC complex, containing multiple copies of TatA, TatB and TatC subunits, and a separate TatA complex, containing only TatA subunits. Substrates initially bind to the TatABC complex, which probably triggers association of the separate TatA complex to form the active translocon.

It is found in the cell inner membrane. Functionally, part of the twin-arginine translocation (Tat) system that transports large folded proteins containing a characteristic twin-arginine motif in their signal peptide across membranes. TatA could form the protein-conducting channel of the Tat system. The chain is Sec-independent protein translocase protein TatA from Thiobacillus denitrificans (strain ATCC 25259 / T1).